Consider the following 105-residue polypeptide: Flowering-promoting factor 1-like protein 5 (105 aa).

Belongs to the FPF1 family.

The chain is Flowering-promoting factor 1-like protein 5 from Oryza sativa subsp. japonica (Rice).